Consider the following 128-residue polypeptide: Fluoride-specific ion channel FluC (128 aa).

A run of 4 helical transmembrane segments spans residues 3–23 (FSVIFAVGIGGFFGAISRFLI), 34–54 (LFPVGTLTVNVLGSFIIGFLY), 69–89 (FITGFLGALTTFSTFSLETLL), and 100–120 (FLNILLNVILTISSTFAAIIL). Na(+) contacts are provided by glycine 75 and threonine 78.

It belongs to the fluoride channel Fluc/FEX (TC 1.A.43) family.

Its subcellular location is the cell inner membrane. The catalysed reaction is fluoride(in) = fluoride(out). With respect to regulation, na(+) is not transported, but it plays an essential structural role and its presence is essential for fluoride channel function. Its function is as follows. Fluoride-specific ion channel. Important for reducing fluoride concentration in the cell, thus reducing its toxicity. The polypeptide is Fluoride-specific ion channel FluC (Nitratiruptor sp. (strain SB155-2)).